The chain runs to 256 residues: Ubiquinone/menaquinone biosynthesis C-methyltransferase UbiE (256 aa).

S-adenosyl-L-methionine-binding positions include threonine 79, aspartate 100, and 128 to 129 (DA).

This sequence belongs to the class I-like SAM-binding methyltransferase superfamily. MenG/UbiE family.

The catalysed reaction is a 2-demethylmenaquinol + S-adenosyl-L-methionine = a menaquinol + S-adenosyl-L-homocysteine + H(+). The enzyme catalyses a 2-methoxy-6-(all-trans-polyprenyl)benzene-1,4-diol + S-adenosyl-L-methionine = a 5-methoxy-2-methyl-3-(all-trans-polyprenyl)benzene-1,4-diol + S-adenosyl-L-homocysteine + H(+). Its pathway is quinol/quinone metabolism; menaquinone biosynthesis; menaquinol from 1,4-dihydroxy-2-naphthoate: step 2/2. It functions in the pathway cofactor biosynthesis; ubiquinone biosynthesis. Its function is as follows. Methyltransferase required for the conversion of demethylmenaquinol (DMKH2) to menaquinol (MKH2) and the conversion of 2-polyprenyl-6-methoxy-1,4-benzoquinol (DDMQH2) to 2-polyprenyl-3-methyl-6-methoxy-1,4-benzoquinol (DMQH2). The chain is Ubiquinone/menaquinone biosynthesis C-methyltransferase UbiE from Pseudomonas aeruginosa (strain LESB58).